The following is a 201-amino-acid chain: Potassium-transporting ATPase KdpC subunit (201 aa).

The helical transmembrane segment at 7–29 threads the bilayer; sequence PALVLLTALTAITGLAYPLAMTG.

Belongs to the KdpC family. As to quaternary structure, the system is composed of three essential subunits: KdpA, KdpB and KdpC.

The protein resides in the cell inner membrane. Part of the high-affinity ATP-driven potassium transport (or Kdp) system, which catalyzes the hydrolysis of ATP coupled with the electrogenic transport of potassium into the cytoplasm. This subunit acts as a catalytic chaperone that increases the ATP-binding affinity of the ATP-hydrolyzing subunit KdpB by the formation of a transient KdpB/KdpC/ATP ternary complex. This is Potassium-transporting ATPase KdpC subunit from Methylorubrum populi (strain ATCC BAA-705 / NCIMB 13946 / BJ001) (Methylobacterium populi).